The chain runs to 284 residues: Nucleotide-binding protein in ptsO 5'region (284 aa).

An ATP-binding site is contributed by 8–15 (GRSGSGKS). A GTP-binding site is contributed by 60 to 63 (DARN).

This sequence belongs to the RapZ-like family.

In terms of biological role, displays ATPase and GTPase activities. This chain is Nucleotide-binding protein in ptsO 5'region, found in Pseudomonas putida (Arthrobacter siderocapsulatus).